The chain runs to 547 residues: MAAKDVKFDIDARNRMLKGVNILADAVKVTLGPKGRNVVLDKSFGAPRITKDGVSVAKEIELEDKFENMGAQMVKEVASRTNDEAGDGTTTATVLAQAIVKEGMKSVAAGMNPMDLKRGIDLATSKVVEAIKSAARPVNDSAEVAQVGTISANGESEIGQQIADAMQKVGNEGVITVEENKGLETETDVVEGMQFDRGYLSPYFVTNPDKMTTELEDAIILLHEKKLSSLQPMVPLLESVIQSGKPLLIIAEDVEGEALATLVVNKLRGGLKIAAVKAPGFGDRRKAMLQDIAILTGGQVISEDLGMKLESVTIDMLGSAKRVSITKDETTIVDGAGAKAEIEARVAQIRNQIEETTSDYDREKLQERVAKLAGGVAVIRVGGMTEVEVKERKDRVDDALNATRAAVQEGIVVGGGVALIQAAKHLDGLEGANNDQNIGINIVRKALEAPLRQIAENAGVDGSVVAGKIRESSDLAFGFNAQTEEYGDMFKFGVIDPAKVVRTALQDAASIAGLLITTEAMVADKPAKEGAGAGGGMPDMGGMGGMM.

ATP-binding positions include 30–33 (TLGP), Lys51, 87–91 (DGTTT), Gly415, and Asp496. Residues 528–547 (KEGAGAGGGMPDMGGMGGMM) form a disordered region. The span at 531-547 (AGAGGGMPDMGGMGGMM) shows a compositional bias: gly residues.

Belongs to the chaperonin (HSP60) family. As to quaternary structure, forms a cylinder of 14 subunits composed of two heptameric rings stacked back-to-back. Interacts with the co-chaperonin GroES.

It is found in the cytoplasm. It catalyses the reaction ATP + H2O + a folded polypeptide = ADP + phosphate + an unfolded polypeptide.. In terms of biological role, together with its co-chaperonin GroES, plays an essential role in assisting protein folding. The GroEL-GroES system forms a nano-cage that allows encapsulation of the non-native substrate proteins and provides a physical environment optimized to promote and accelerate protein folding. The protein is Chaperonin GroEL of Dinoroseobacter shibae (strain DSM 16493 / NCIMB 14021 / DFL 12).